A 125-amino-acid polypeptide reads, in one-letter code: Protein Turandot F (125 aa).

The signal sequence occupies residues 1-19 (MKTVILFGFLLALLGYLEA).

It belongs to the Turandot family.

The protein localises to the secreted. Its function is as follows. A humoral factor that may play a role in stress tolerance. The chain is Protein Turandot F from Drosophila melanogaster (Fruit fly).